A 43-amino-acid chain; its full sequence is Alpha-conotoxin-like Leo-A1 (43 aa).

The propeptide occupies 1–26 (LTLDRASDDTDVAAEIMSGLIALAID). Disulfide bonds link Cys28/Cys34 and Cys29/Cys42. A lacks the Ser-Xaa-Pro motif that is crucial for potent interaction with nAChR region spans residues 30–32 (SDS).

It belongs to the conotoxin A superfamily. Expressed by the venom duct.

It is found in the secreted. Functionally, alpha-conotoxins act on postsynaptic membranes, they bind to the nicotinic acetylcholine receptors (nAChR) and thus inhibit them. Has possibly a distinct nAChR binding mode from other alpha-conotoxins, due to a different three residue motif (lacks the Ser-Xaa-Pro motif). The chain is Alpha-conotoxin-like Leo-A1 from Conus leopardus (Leopard cone).